We begin with the raw amino-acid sequence, 65 residues long: Large ribosomal subunit protein bL33c (65 aa).

The protein belongs to the bacterial ribosomal protein bL33 family.

It localises to the plastid. It is found in the chloroplast. The chain is Large ribosomal subunit protein bL33c from Staurastrum punctulatum (Green alga).